We begin with the raw amino-acid sequence, 568 residues long: NADPH oxidase 3 (568 aa).

At 1–13 (MMGCWILNEGLST) the chain is on the cytoplasmic side. The chain crosses the membrane as a helical span at residues 14–34 (ILVLSWLGINFYLFIDTFYWY). The Extracellular portion of the chain corresponds to 35–51 (EEEESFHYTRVILGSTL). A helical membrane pass occupies residues 52 to 72 (AWARASALCLNFNCMLILIPV). The Ferric oxidoreductase domain occupies 55–284 (RASALCLNFN…VVLYACERII (230 aa)). Over 73–103 (SRNLISFIRGTSICCRGPWRRQLDKNLRFHK) the chain is Cytoplasmic. A helical membrane pass occupies residues 104-124 (LVAYGIAVNATIHIVAHFFNL). Residues 125–167 (ERYHWSQSEEAQGLLAALSKLGNTPNESYLNPVRTFPTNTTTE) lie on the Extracellular side of the membrane. A glycan (N-linked (GlcNAc...) asparagine) is linked at Asn-163. Residues 168–188 (LLRTIAGVTGLVISLALVLIM) form a helical membrane-spanning segment. Residues 189–201 (TSSTEFIRQASYE) are Cytoplasmic-facing. The helical transmembrane segment at 202–222 (LFWYTHHVFIVFFLSLAIHGT) threads the bilayer. Residues 223 to 395 (GRIVRGQTQD…DGPFGTALTD (173 aa)) are Extracellular-facing. A glycan (N-linked (GlcNAc...) asparagine) is linked at Asn-238. Residues 285 to 395 (RFWRFQQEVV…DGPFGTALTD (111 aa)) form the FAD-binding FR-type domain. Residues 396–416 (VFHYPVCVCVAAGIGVTPFAA) form a helical membrane-spanning segment. The Cytoplasmic segment spans residues 417–568 (LLKSIWYKCS…VHFYYNKESF (152 aa)).

As to quaternary structure, interacts with CYBA/p22phox. Heterodimerization with CYBA/p22phox is essential for its activity and cell membrane localization. The cofactor is heme. Post-translationally, N-glycosylated in a CYBA/p22phox-dependent manner.

The protein localises to the cell membrane. The enzyme catalyses NADPH + 2 O2 = 2 superoxide + NADP(+) + H(+). With respect to regulation, activated by the ototoxic drug cisplatin. Activated by NOXO1. Cooperatively activated by NCF1 and NCF2 or NOXA1 in a phorbol 12-myristate 13-acetate (PMA)-dependent manner. Inhibited by diphenyleneiodonium chloride. In terms of biological role, NADPH oxidase that catalyzes the generation of superoxide from molecular oxygen utilizing NADPH as an electron donor, upon formation of a complex with CYBA/p22phox. Plays a role in the biogenesis of otoconia/otolith, which are crystalline structures of the inner ear involved in the perception of gravity. The chain is NADPH oxidase 3 (NOX3) from Homo sapiens (Human).